The sequence spans 209 residues: Max dimerization protein 4 (209 aa).

The tract at residues 6-23 (LLILLEAAEYLERRDREA) is interaction with SIN3A and SIN3B. One can recognise a bHLH domain in the interval 53-105 (NNRSSHNELEKHRRAKLRLYLEQLKQLVPLGPDSTRHTTLSLLKRAKVHIKKL). The disordered stretch occupies residues 140 to 209 (RVRTDSTGSA…CRRLGRPALS (70 aa)). The span at 153 to 163 (DDSEQEVDIEG) shows a compositional bias: acidic residues. The segment covering 199–209 (HCRRLGRPALS) has biased composition (basic residues).

In terms of assembly, efficient DNA binding requires dimerization with another bHLH protein. Binds DNA as a heterodimer with MAX. Interacts with SIN3A AND SIN3B. Interacts with RNF17.

The protein localises to the nucleus. Its function is as follows. Transcriptional repressor. Binds with MAX to form a sequence-specific DNA-binding protein complex which recognizes the core sequence 5'-CAC[GA]TG-3'. Antagonizes MYC transcriptional activity by competing for MAX and suppresses MYC dependent cell transformation. In Homo sapiens (Human), this protein is Max dimerization protein 4 (MXD4).